A 405-amino-acid chain; its full sequence is Threonine synthase (405 aa).

Lys-104 is subject to N6-(pyridoxal phosphate)lysine. Residues Asn-130, 231–235 (GNAGN), and Thr-369 contribute to the pyridoxal 5'-phosphate site.

This sequence belongs to the threonine synthase family. In terms of assembly, homotrimer. Pyridoxal 5'-phosphate is required as a cofactor.

The catalysed reaction is O-phospho-L-homoserine + H2O = L-threonine + phosphate. It participates in amino-acid biosynthesis; L-threonine biosynthesis; L-threonine from L-aspartate: step 5/5. Functionally, catalyzes the gamma-elimination of phosphate from L-phosphohomoserine and the beta-addition of water to produce L-threonine. Does not catalyze the conversion of O-acetyl-L-homoserine into threonine. In Methanosarcina acetivorans (strain ATCC 35395 / DSM 2834 / JCM 12185 / C2A), this protein is Threonine synthase (thrC).